We begin with the raw amino-acid sequence, 309 residues long: Porphobilinogen deaminase (309 aa).

Cysteine 244 is subject to S-(dipyrrolylmethanemethyl)cysteine.

Belongs to the HMBS family. Monomer. Requires dipyrromethane as cofactor.

The catalysed reaction is 4 porphobilinogen + H2O = hydroxymethylbilane + 4 NH4(+). It functions in the pathway porphyrin-containing compound metabolism; protoporphyrin-IX biosynthesis; coproporphyrinogen-III from 5-aminolevulinate: step 2/4. Functionally, tetrapolymerization of the monopyrrole PBG into the hydroxymethylbilane pre-uroporphyrinogen in several discrete steps. This chain is Porphobilinogen deaminase, found in Rhizobium meliloti (strain 1021) (Ensifer meliloti).